We begin with the raw amino-acid sequence, 556 residues long: Arginine--tRNA ligase (556 aa).

Positions 132 to 142 (ANPTGDLHLGH) match the 'HIGH' region motif.

It belongs to the class-I aminoacyl-tRNA synthetase family. Monomer.

The protein localises to the cytoplasm. It carries out the reaction tRNA(Arg) + L-arginine + ATP = L-arginyl-tRNA(Arg) + AMP + diphosphate. This is Arginine--tRNA ligase from Listeria monocytogenes serotype 4a (strain HCC23).